Reading from the N-terminus, the 593-residue chain is MLO-like protein 8 (593 aa).

Over 1 to 46 the chain is Extracellular; the sequence is MGIIDGSLLRRLICLCLWCLLGGGVTVVTAEDEKKVVHKQLNQTPT. The helical transmembrane segment at 47–67 threads the bilayer; it reads WAVAAVCTFFIVVSVLLEKLL. Over 68–92 the chain is Cytoplasmic; it reads HKVGKVLWDRHKTALLDALEKIKAE. The chain crosses the membrane as a helical span at residues 93-113; the sequence is LMVLGFISLLLTFGQTYILDI. Residues 114 to 181 are Extracellular-facing; sequence CIPSHVARTM…ISAEALHQLH (68 aa). Residues 182–202 form a helical membrane-spanning segment; the sequence is ILIFFLAIFHVLYSFLTMMLG. At 203 to 304 the chain is on the cytoplasmic side; sequence RLKIRGWKHW…IKRSLEDDFK (102 aa). The chain crosses the membrane as a helical span at residues 305-325; the sequence is VVVGVSPVLWGSFVLFLLLNI. Position 326 (D326) is a topological domain, extracellular. Residues 327–347 traverse the membrane as a helical segment; the sequence is GFKMMFIGTAIPVIIILAVGT. Residues 348–393 are Cytoplasmic-facing; it reads KLQAIMTRMALGITDRHAVVQGMPLVQGNDEYFWFGRPHLILHLMH. A helical membrane pass occupies residues 394–414; sequence FALFQNAFQITYFFWIWYSFG. Residues 415-430 lie on the Extracellular side of the membrane; that stretch reads SDSCYHPNFKIALVKV. Residues 431-451 form a helical membrane-spanning segment; it reads AIALGVLCLCSYITLPLYALV. Over 452 to 593 the chain is Cytoplasmic; it reads TQMGSRMKKS…APSNESSQDR (142 aa). Residues 465-486 form a calmodulin-binding region; that stretch reads EQTSKALKKWRMAVKKKKGVKA. Positions 481 to 593 are disordered; sequence KKGVKATTKR…APSNESSQDR (113 aa). The span at 489 to 512 shows a compositional bias: low complexity; the sequence is KRLGGDGSASPTASTVRSTSSVRS. A compositionally biased stretch (acidic residues) spans 528 to 539; sequence LDPETSDLDTDN. Over residues 567–579 the composition is skewed to basic and acidic residues; sequence TSRDTETDSKEFS.

Belongs to the MLO family.

The protein resides in the membrane. Functionally, may be involved in modulation of pathogen defense and leaf cell death. Activity seems to be regulated by Ca(2+)-dependent calmodulin binding and seems not to require heterotrimeric G proteins. This is MLO-like protein 8 (MLO8) from Arabidopsis thaliana (Mouse-ear cress).